Here is a 193-residue protein sequence, read N- to C-terminus: 3-isopropylmalate dehydratase small subunit (193 aa).

This sequence belongs to the LeuD family. LeuD type 1 subfamily. In terms of assembly, heterodimer of LeuC and LeuD.

It catalyses the reaction (2R,3S)-3-isopropylmalate = (2S)-2-isopropylmalate. It participates in amino-acid biosynthesis; L-leucine biosynthesis; L-leucine from 3-methyl-2-oxobutanoate: step 2/4. Functionally, catalyzes the isomerization between 2-isopropylmalate and 3-isopropylmalate, via the formation of 2-isopropylmaleate. The sequence is that of 3-isopropylmalate dehydratase small subunit from Bacillus cereus (strain 03BB102).